A 352-amino-acid chain; its full sequence is C-C chemokine receptor type 5 (352 aa).

Topologically, residues 1–30 (MDYQVSSPTYDIDYYTSEPCQKINVKQIAA) are extracellular. Sulfotyrosine is present on tyrosine 3. 2 O-linked (GalNAc...) serine glycosylation sites follow: serine 6 and serine 7. Tyrosine 10, tyrosine 14, and tyrosine 15 each carry sulfotyrosine. 2 cysteine pairs are disulfide-bonded: cysteine 20–cysteine 269 and cysteine 101–cysteine 178. A helical membrane pass occupies residues 31–58 (RLLPPLYSLVFIFGFVGNILVVLILINC). The Cytoplasmic portion of the chain corresponds to 59 to 68 (KRLKSMTDIY). Residues 69–89 (LLNLAISDLLFLLTVPFWAHY) traverse the membrane as a helical segment. At 90 to 102 (AAAQWDFGNTMCQ) the chain is on the extracellular side. Residues 103-124 (LLTGLYFIGFFSGIFFIILLTI) traverse the membrane as a helical segment. Residues 125-141 (DRYLAIVHAVFALKART) are Cytoplasmic-facing. The chain crosses the membrane as a helical span at residues 142–166 (VTFGVVTSVITWVVAVFASLPGIIF). The Extracellular portion of the chain corresponds to 167-198 (TRSQREGLHYTCSSHFPYSQYQFWKNFQTLKM). A helical transmembrane segment spans residues 199-218 (VILGLVLPLLVMVICYSGIL). The Cytoplasmic portion of the chain corresponds to 219–235 (KTLLRCRNEKKRHRAVR). Residues 236 to 260 (LIFTIMIVYFLFWAPYNIVLLLNTF) form a helical membrane-spanning segment. Residues 261-277 (QEFFGLNNCSSSNRLDQ) are Extracellular-facing. Residues 278 to 301 (AMQVTETLGMTHCCINPIIYAFVG) form a helical membrane-spanning segment. At 302–352 (EKFRNYLLVFFQKHIAKRFCKCCSIFQQEAPERASSVYTRSTAEQEISVGL) the chain is on the cytoplasmic side. S-palmitoyl cysteine attachment occurs at residues cysteine 321, cysteine 323, and cysteine 324. Phosphoserine; by BARK1 is present on residues serine 336, serine 337, serine 342, and serine 349.

This sequence belongs to the G-protein coupled receptor 1 family. In terms of assembly, interacts with PRAF2. Efficient ligand binding to CCL3/MIP-1alpha and CCL4/MIP-1beta requires sulfation, O-glycosylation and sialic acid modifications. Glycosylation on Ser-6 is required for efficient binding of CCL4. Interacts with GRK2. Interacts with ARRB1 and ARRB2. Interacts with CNIH4. Interacts with S100A4; this interaction stimulates T-lymphocyte chemotaxis. Post-translationally, sulfated on at least 2 of the N-terminal tyrosines. Sulfation is required for efficient binding of the chemokines, CCL3 and CCL4. In terms of processing, palmitoylation in the C-terminal is important for cell surface expression. Phosphorylation on serine residues in the C-terminal is stimulated by binding CC chemokines especially by APO-RANTES. Post-translationally, O-glycosylated, but not N-glycosylated. Ser-6 appears to be the major site even if Ser-7 may be also O-glycosylated. Also sialylated glycans present which contribute to chemokine binding. Thr-16 and Ser-17 may also be glycosylated and, if so, with small moieties such as a T-antigen.

Its subcellular location is the cell membrane. Functionally, receptor for a number of inflammatory CC-chemokines including CCL3/MIP-1-alpha, CCL4/MIP-1-beta and RANTES and subsequently transduces a signal by increasing the intracellular calcium ion level. May play a role in the control of granulocytic lineage proliferation or differentiation. Participates in T-lymphocyte migration to the infection site by acting as a chemotactic receptor. This chain is C-C chemokine receptor type 5 (CCR5), found in Macaca arctoides (Stump-tailed macaque).